The sequence spans 205 residues: Ribosomal RNA small subunit methyltransferase G (205 aa).

S-adenosyl-L-methionine is bound by residues glycine 70, leucine 75, 124–125, and arginine 138; that span reads IE.

The protein belongs to the methyltransferase superfamily. RNA methyltransferase RsmG family.

The protein resides in the cytoplasm. It catalyses the reaction guanosine(527) in 16S rRNA + S-adenosyl-L-methionine = N(7)-methylguanosine(527) in 16S rRNA + S-adenosyl-L-homocysteine. Functionally, specifically methylates the N7 position of guanine in position 527 of 16S rRNA. The sequence is that of Ribosomal RNA small subunit methyltransferase G from Ruegeria sp. (strain TM1040) (Silicibacter sp.).